Consider the following 472-residue polypeptide: Siroheme synthase (472 aa).

The tract at residues 1–207 (MNFLPIFLDI…GKDQAAKAWL (207 aa)) is precorrin-2 dehydrogenase /sirohydrochlorin ferrochelatase. Residues 22 to 23 (EV) and 43 to 44 (PR) each bind NAD(+). At Ser132 the chain carries Phosphoserine. Residues 221–472 (GEVYLVGAGP…QPEGNLPGAE (252 aa)) are uroporphyrinogen-III C-methyltransferase. Pro230 contributes to the S-adenosyl-L-methionine binding site. Asp253 (proton acceptor) is an active-site residue. Lys275 serves as the catalytic Proton donor. Residues 306–308 (GGD), Ile311, 336–337 (TA), Met388, and Gly417 each bind S-adenosyl-L-methionine.

The protein in the N-terminal section; belongs to the precorrin-2 dehydrogenase / sirohydrochlorin ferrochelatase family. It in the C-terminal section; belongs to the precorrin methyltransferase family.

It carries out the reaction uroporphyrinogen III + 2 S-adenosyl-L-methionine = precorrin-2 + 2 S-adenosyl-L-homocysteine + H(+). It catalyses the reaction precorrin-2 + NAD(+) = sirohydrochlorin + NADH + 2 H(+). The enzyme catalyses siroheme + 2 H(+) = sirohydrochlorin + Fe(2+). The protein operates within cofactor biosynthesis; adenosylcobalamin biosynthesis; precorrin-2 from uroporphyrinogen III: step 1/1. It participates in cofactor biosynthesis; adenosylcobalamin biosynthesis; sirohydrochlorin from precorrin-2: step 1/1. It functions in the pathway porphyrin-containing compound metabolism; siroheme biosynthesis; precorrin-2 from uroporphyrinogen III: step 1/1. Its pathway is porphyrin-containing compound metabolism; siroheme biosynthesis; siroheme from sirohydrochlorin: step 1/1. The protein operates within porphyrin-containing compound metabolism; siroheme biosynthesis; sirohydrochlorin from precorrin-2: step 1/1. Its function is as follows. Multifunctional enzyme that catalyzes the SAM-dependent methylations of uroporphyrinogen III at position C-2 and C-7 to form precorrin-2 via precorrin-1. Then it catalyzes the NAD-dependent ring dehydrogenation of precorrin-2 to yield sirohydrochlorin. Finally, it catalyzes the ferrochelation of sirohydrochlorin to yield siroheme. The protein is Siroheme synthase of Nitrosospira multiformis (strain ATCC 25196 / NCIMB 11849 / C 71).